The following is a 264-amino-acid chain: Endonuclease V (264 aa).

Positions 72 and 137 each coordinate Mg(2+).

It belongs to the endonuclease V family. Mg(2+) is required as a cofactor.

It localises to the cytoplasm. It carries out the reaction Endonucleolytic cleavage at apurinic or apyrimidinic sites to products with a 5'-phosphate.. Its function is as follows. DNA repair enzyme involved in the repair of deaminated bases. Selectively cleaves double-stranded DNA at the second phosphodiester bond 3' to a deoxyinosine leaving behind the intact lesion on the nicked DNA. The sequence is that of Endonuclease V from Halobacterium salinarum (strain ATCC 700922 / JCM 11081 / NRC-1) (Halobacterium halobium).